We begin with the raw amino-acid sequence, 424 residues long: tRNA(Ile)-lysidine synthase (424 aa).

26–31 (SGGIDS) lines the ATP pocket.

The protein belongs to the tRNA(Ile)-lysidine synthase family.

It localises to the cytoplasm. The enzyme catalyses cytidine(34) in tRNA(Ile2) + L-lysine + ATP = lysidine(34) in tRNA(Ile2) + AMP + diphosphate + H(+). Functionally, ligates lysine onto the cytidine present at position 34 of the AUA codon-specific tRNA(Ile) that contains the anticodon CAU, in an ATP-dependent manner. Cytidine is converted to lysidine, thus changing the amino acid specificity of the tRNA from methionine to isoleucine. The chain is tRNA(Ile)-lysidine synthase from Streptococcus agalactiae serotype V (strain ATCC BAA-611 / 2603 V/R).